We begin with the raw amino-acid sequence, 471 residues long: 3-isopropylmalate dehydratase large subunit (471 aa).

3 residues coordinate [4Fe-4S] cluster: cysteine 347, cysteine 407, and cysteine 410.

Belongs to the aconitase/IPM isomerase family. LeuC type 1 subfamily. In terms of assembly, heterodimer of LeuC and LeuD. The cofactor is [4Fe-4S] cluster.

It carries out the reaction (2R,3S)-3-isopropylmalate = (2S)-2-isopropylmalate. Its pathway is amino-acid biosynthesis; L-leucine biosynthesis; L-leucine from 3-methyl-2-oxobutanoate: step 2/4. Functionally, catalyzes the isomerization between 2-isopropylmalate and 3-isopropylmalate, via the formation of 2-isopropylmaleate. The polypeptide is 3-isopropylmalate dehydratase large subunit (Granulibacter bethesdensis (strain ATCC BAA-1260 / CGDNIH1)).